Consider the following 393-residue polypeptide: Metal tolerance protein C2 (393 aa).

The tract at residues 1-23 (MERSISFNPRGDNELPDDRSSDV) is disordered. At 1–113 (MERSISFNPR…VTSGNRQMKR (113 aa)) the chain is on the cytoplasmic side. A compositionally biased stretch (basic and acidic residues) spans 11–21 (GDNELPDDRSS). Residues 114–134 (LFLLIALNVLYSTTELSIGIF) traverse the membrane as a helical segment. Over 135–139 (TGRVG) the chain is Vacuolar. A helical membrane pass occupies residues 140–160 (LVSDAFHLTFGCGLLTFSLFA). At 161 to 186 (MATSRKKPDHAYSYGYKRLEVLSAFT) the chain is on the cytoplasmic side. Residues 187–207 (NALFLMFMSFSLAVEALHAFI) form a helical membrane-spanning segment. At 208-214 (QDESEHK) the chain is on the vacuolar side. A helical transmembrane segment spans residues 215 to 235 (HYLIVSAVTNLLVNLLGVWFF). The Cytoplasmic segment spans residues 236–259 (RNYARVNIAYRKAEDMNYHSVCLH). A helical transmembrane segment spans residues 260 to 280 (VISDSIRSAGLILASWLLSLG). Over 281-283 (VEN) the chain is Vacuolar. Residues 284–304 (AEVLCLGLVSVTVFMLVMPLF) traverse the membrane as a helical segment. Residues 305–393 (KATGGVLLQM…QDLTLQTDYT (89 aa)) are Cytoplasmic-facing.

This sequence belongs to the cation diffusion facilitator (CDF) transporter (TC 2.A.4) family.

It localises to the vacuole membrane. Functionally, involved in sequestration of excess metal in the cytoplasm into vacuoles to maintain metal homeostasis. This chain is Metal tolerance protein C2 (MTPC2), found in Arabidopsis thaliana (Mouse-ear cress).